The primary structure comprises 143 residues: Large ribosomal subunit protein uL11 (143 aa).

Belongs to the universal ribosomal protein uL11 family. In terms of assembly, part of the ribosomal stalk of the 50S ribosomal subunit. Interacts with L10 and the large rRNA to form the base of the stalk. L10 forms an elongated spine to which L12 dimers bind in a sequential fashion forming a multimeric L10(L12)X complex. One or more lysine residues are methylated.

In terms of biological role, forms part of the ribosomal stalk which helps the ribosome interact with GTP-bound translation factors. The protein is Large ribosomal subunit protein uL11 of Pseudomonas savastanoi pv. phaseolicola (strain 1448A / Race 6) (Pseudomonas syringae pv. phaseolicola (strain 1448A / Race 6)).